The chain runs to 50 residues: Photosystem II reaction center protein M (50 aa).

Residues 7 to 27 (GFVASLLFVGVPTIFLIGLFI) traverse the membrane as a helical segment.

This sequence belongs to the PsbM family. In terms of assembly, PSII is composed of 1 copy each of membrane proteins PsbA, PsbB, PsbC, PsbD, PsbE, PsbF, PsbH, PsbI, PsbJ, PsbK, PsbL, PsbM, PsbT, PsbX, PsbY, Psb30/Ycf12, peripheral proteins PsbO, CyanoQ (PsbQ), PsbU, PsbV and a large number of cofactors. It forms dimeric complexes.

It localises to the cellular thylakoid membrane. Functionally, one of the components of the core complex of photosystem II (PSII). PSII is a light-driven water:plastoquinone oxidoreductase that uses light energy to abstract electrons from H(2)O, generating O(2) and a proton gradient subsequently used for ATP formation. It consists of a core antenna complex that captures photons, and an electron transfer chain that converts photonic excitation into a charge separation. This subunit is found at the monomer-monomer interface. This Prochlorococcus marinus (strain MIT 9515) protein is Photosystem II reaction center protein M.